A 401-amino-acid chain; its full sequence is uncharacterized protein (401 aa).

Residues Cys7, Cys13, Cys16, and Cys94 each contribute to the [4Fe-4S] cluster site. S-adenosyl-L-methionine is bound by residues Gln230, Tyr259, Glu280, and Asp328. Cys355 (nucleophile) is an active-site residue.

This sequence belongs to the class I-like SAM-binding methyltransferase superfamily. RNA M5U methyltransferase family.

This is an uncharacterized protein from Chlamydia caviae (strain ATCC VR-813 / DSM 19441 / 03DC25 / GPIC) (Chlamydophila caviae).